Consider the following 616-residue polypeptide: Probable methyltransferase PMT2 (616 aa).

The Cytoplasmic segment spans residues 1-13; the sequence is MALKSSSADGKTR. Residues 14-34 traverse the membrane as a helical; Signal-anchor for type II membrane protein segment; sequence SSVQIFIVFSLCCFFYILGAW. Over 35-616 the chain is Lumenal; sequence QRSGFGKGDS…YWVTNSTSTH (582 aa). N-linked (GlcNAc...) asparagine glycosylation is found at Asn205 and Asn611.

It belongs to the methyltransferase superfamily.

The protein localises to the golgi apparatus membrane. The protein is Probable methyltransferase PMT2 of Arabidopsis thaliana (Mouse-ear cress).